The primary structure comprises 21 residues: Chlorophyllase type 2 (21 aa).

Belongs to the AB hydrolase superfamily. Lipase family.

The enzyme catalyses a chlorophyll + H2O = a chlorophyllide + phytol + H(+). It participates in porphyrin-containing compound metabolism; chlorophyll degradation. Catalyzes the hydrolysis of ester bond in chlorophyll to yield chlorophyllide and phytol. The polypeptide is Chlorophyllase type 2 (Chenopodium album (Fat hen)).